The primary structure comprises 151 residues: SsrA-binding protein (151 aa).

Residues 132-151 (KRQTIKKRDQDREIHRKYGI) form a disordered region.

The protein belongs to the SmpB family.

It is found in the cytoplasm. In terms of biological role, required for rescue of stalled ribosomes mediated by trans-translation. Binds to transfer-messenger RNA (tmRNA), required for stable association of tmRNA with ribosomes. tmRNA and SmpB together mimic tRNA shape, replacing the anticodon stem-loop with SmpB. tmRNA is encoded by the ssrA gene; the 2 termini fold to resemble tRNA(Ala) and it encodes a 'tag peptide', a short internal open reading frame. During trans-translation Ala-aminoacylated tmRNA acts like a tRNA, entering the A-site of stalled ribosomes, displacing the stalled mRNA. The ribosome then switches to translate the ORF on the tmRNA; the nascent peptide is terminated with the 'tag peptide' encoded by the tmRNA and targeted for degradation. The ribosome is freed to recommence translation, which seems to be the essential function of trans-translation. This chain is SsrA-binding protein, found in Lactobacillus gasseri (strain ATCC 33323 / DSM 20243 / BCRC 14619 / CIP 102991 / JCM 1131 / KCTC 3163 / NCIMB 11718 / NCTC 13722 / AM63).